Consider the following 300-residue polypeptide: 4-hydroxy-tetrahydrodipicolinate synthase (300 aa).

Residue Thr-49 participates in pyruvate binding. Tyr-137 (proton donor/acceptor) is an active-site residue. The Schiff-base intermediate with substrate role is filled by Lys-166. Pyruvate is bound at residue Ile-208.

Belongs to the DapA family. Homotetramer; dimer of dimers.

The protein localises to the cytoplasm. The enzyme catalyses L-aspartate 4-semialdehyde + pyruvate = (2S,4S)-4-hydroxy-2,3,4,5-tetrahydrodipicolinate + H2O + H(+). It functions in the pathway amino-acid biosynthesis; L-lysine biosynthesis via DAP pathway; (S)-tetrahydrodipicolinate from L-aspartate: step 3/4. Catalyzes the condensation of (S)-aspartate-beta-semialdehyde [(S)-ASA] and pyruvate to 4-hydroxy-tetrahydrodipicolinate (HTPA). This is 4-hydroxy-tetrahydrodipicolinate synthase from Methanopyrus kandleri (strain AV19 / DSM 6324 / JCM 9639 / NBRC 100938).